The following is a 170-amino-acid chain: Probable T4-type lysozyme 1 (170 aa).

Glutamate 13 acts as the Proton donor in catalysis. Residue aspartate 22 is the Nucleophile of the active site.

It belongs to the glycosyl hydrolase 24 family.

The enzyme catalyses Hydrolysis of (1-&gt;4)-beta-linkages between N-acetylmuramic acid and N-acetyl-D-glucosamine residues in a peptidoglycan and between N-acetyl-D-glucosamine residues in chitodextrins.. The protein is Probable T4-type lysozyme 1 of Dictyostelium discoideum (Social amoeba).